The primary structure comprises 242 residues: Probable ABC transporter ATP-binding protein PEB1C (242 aa).

The ABC transporter domain occupies 2 to 236 (IELKNVNKYY…PKTERARLFL (235 aa)). ATP is bound at residue 34-41 (GPSGSGKS).

It belongs to the ABC transporter superfamily.

Its subcellular location is the cell inner membrane. In terms of biological role, most probably involved, with PEB1, in a binding-protein-dependent transport system for an amino acid. Probably responsible for energy coupling to the transport system. This is Probable ABC transporter ATP-binding protein PEB1C (peb1C) from Campylobacter jejuni subsp. jejuni serotype O:2 (strain ATCC 700819 / NCTC 11168).